The sequence spans 258 residues: Imidazole glycerol phosphate synthase subunit HisF (258 aa).

Residues Asp12 and Asp131 contribute to the active site.

Belongs to the HisA/HisF family. In terms of assembly, heterodimer of HisH and HisF.

The protein resides in the cytoplasm. It carries out the reaction 5-[(5-phospho-1-deoxy-D-ribulos-1-ylimino)methylamino]-1-(5-phospho-beta-D-ribosyl)imidazole-4-carboxamide + L-glutamine = D-erythro-1-(imidazol-4-yl)glycerol 3-phosphate + 5-amino-1-(5-phospho-beta-D-ribosyl)imidazole-4-carboxamide + L-glutamate + H(+). It participates in amino-acid biosynthesis; L-histidine biosynthesis; L-histidine from 5-phospho-alpha-D-ribose 1-diphosphate: step 5/9. In terms of biological role, IGPS catalyzes the conversion of PRFAR and glutamine to IGP, AICAR and glutamate. The HisF subunit catalyzes the cyclization activity that produces IGP and AICAR from PRFAR using the ammonia provided by the HisH subunit. In Nitrosomonas eutropha (strain DSM 101675 / C91 / Nm57), this protein is Imidazole glycerol phosphate synthase subunit HisF.